The sequence spans 73 residues: Acyl carrier protein homolog (73 aa).

Positions 1–72 constitute a Carrier domain; the sequence is MAIKEWIITQ…DIIVLIEQKS (72 aa). O-(pantetheine 4'-phosphoryl)serine is present on S32.

Post-translationally, 4'-phosphopantetheine is transferred from CoA to a specific serine of the apo-ACP-like protein.

It functions in the pathway lipid metabolism; fatty acid biosynthesis. Functionally, carrier of the growing fatty acid chain in fatty acid biosynthesis. The chain is Acyl carrier protein homolog from Mycoplasmopsis pulmonis (strain UAB CTIP) (Mycoplasma pulmonis).